The sequence spans 347 residues: Glucose 1-dehydrogenase (347 aa).

Cysteine 39 provides a ligand contact to Zn(2+). Threonine 41 lines the substrate pocket. The Zn(2+) site is built by histidine 64 and glutamate 65. Glutamate 110 and glutamate 146 together coordinate substrate. Residue glutamate 146 coordinates Zn(2+). NADP(+) contacts are provided by residues 178 to 181 (AGPV), 260 to 262 (LGV), and 289 to 291 (SVN). Substrate is bound at residue asparagine 291.

This sequence belongs to the zinc-containing alcohol dehydrogenase family. Glucose 1-dehydrogenase subfamily. Homodimer. It depends on Zn(2+) as a cofactor.

The catalysed reaction is D-glucose + NAD(+) = D-glucono-1,5-lactone + NADH + H(+). It carries out the reaction D-glucose + NADP(+) = D-glucono-1,5-lactone + NADPH + H(+). In terms of biological role, catalyzes the NAD(P)(+)-dependent oxidation of D-glucose to D-gluconate via gluconolactone. To a lesser extent, is also active with xylose as substrate, but mannose, arabinose, galactose, fructose 6-phosphate, glucose 6-phosphate, glycerinaldehyde 3-phosphate, ribose, sorbitol, ethanol, erythritol, or lactose are not oxidized by the enzyme. Can utilize both NAD(+) and NADP(+) as electron acceptor, with a marked preference for NADP(+). Is involved in the degradation of glucose through a non-phosphorylative variant of the Entner-Doudoroff pathway. This is Glucose 1-dehydrogenase (gdh) from Thermoproteus tenax (strain ATCC 35583 / DSM 2078 / JCM 9277 / NBRC 100435 / Kra 1).